The chain runs to 177 residues: Ribonuclease clavin (177 aa).

The first 27 residues, 1–27 (MVAIKNLVLVALTAVTALAMPSPLEER), serve as a signal peptide directing secretion. Disulfide bonds link Cys33/Cys175 and Cys103/Cys159. His77 is an active-site residue. The segment at 98–117 (WGNSDCDRPPKHSKNGDGKN) is disordered. Residues 102-117 (DCDRPPKHSKNGDGKN) are compositionally biased toward basic and acidic residues. The active-site Proton acceptor is Glu123. His164 serves as the catalytic Proton donor.

The protein belongs to the ribonuclease U2 family.

The protein localises to the secreted. Functionally, clavin has the same substrate specificity as alpha-sarcin. It is specific for purines in both single- and double-stranded RNA. Its toxic action on eukaryotic cells is the result of cleavage of a single phosphodiester bond in the 60S subunit of ribosomes. The polypeptide is Ribonuclease clavin (cla) (Aspergillus clavatus (strain ATCC 1007 / CBS 513.65 / DSM 816 / NCTC 3887 / NRRL 1 / QM 1276 / 107)).